A 519-amino-acid polypeptide reads, in one-letter code: Berghepain-1 (519 aa).

At Met-1–Thr-32 the chain is on the cytoplasmic side. The chain crosses the membrane as a helical; Signal-anchor for type II membrane protein span at residues Ile-33 to Phe-53. Over Lys-54–Leu-519 the chain is Lumenal. N-linked (GlcNAc...) asparagine glycosylation is found at Asn-55 and Asn-143. 4 cysteine pairs are disulfide-bonded: Cys-298-Cys-340, Cys-333-Cys-373, Cys-358-Cys-378, and Cys-427-Cys-508. Cys-301 is a catalytic residue. Asn-432 carries N-linked (GlcNAc...) asparagine glycosylation. Residues His-433 and Asn-483 contribute to the active site.

It belongs to the peptidase C1 family.

The protein localises to the membrane. In terms of biological role, cysteine protease. Required for host hepatocyte-derived merozoite infectivity and to a lesser extent for host erythrocyte-derived merozoite infectivity. The polypeptide is Berghepain-1 (Plasmodium berghei (strain Anka)).